We begin with the raw amino-acid sequence, 167 residues long: MNTKITNFSFDKKNLSLAEDIIKKYPPEGKRSAILPLLDLAQRQNGGWLPVPAIEYVANMLEMPYMRAYEVATFYTMFNLKPVGKNHIQVCTTTPCWLRGSDDIMKTCKEKLGIKDEEVTKDQKFSLIEIECLGACVNAPVVQINDDYYEDLTPEKMEAIIDKLRND.

4 residues coordinate [2Fe-2S] cluster: cysteine 91, cysteine 96, cysteine 132, and cysteine 136.

The protein belongs to the complex I 24 kDa subunit family. It depends on [2Fe-2S] cluster as a cofactor.

It carries out the reaction a quinone + NADH + 5 H(+)(in) = a quinol + NAD(+) + 4 H(+)(out). NDH-1 shuttles electrons from NADH, via FMN and iron-sulfur (Fe-S) centers, to quinones in the respiratory chain. Couples the redox reaction to proton translocation (for every two electrons transferred, four hydrogen ions are translocated across the cytoplasmic membrane), and thus conserves the redox energy in a proton gradient. The chain is NADH-quinone oxidoreductase subunit E (nuoE) from Rickettsia bellii (strain RML369-C).